The sequence spans 760 residues: Heat shock transcription factor (760 aa).

Disordered stretches follow at residues 1–132 (MIMN…PPVV) and 206–276 (FHPL…GPKT). Composition is skewed to polar residues over residues 19–31 (TESNSGNETSSPS) and 38–88 (RSGT…SNKL). A compositionally biased stretch (basic and acidic residues) spans 119–130 (DYKDSIDLDKPP). Over residues 221–247 (AGPANNSQQQQQQQQQDSSIPSDGISS) the composition is skewed to low complexity. Residues 276 to 385 (TRPAFVMKIW…EDLLDKIVRN (110 aa)) mediate DNA binding. An involved in trimerization region spans residues 414-467 (ELETIKMNQYVISEDLRRVRQDNKMLWQENYLNRERNQVQGRTLDKILKFLSVV). Disordered stretches follow at residues 492 to 545 (TQYR…NNNN), 560 to 582 (LTNRAHSRRPSMSRTKSTPEGSI), 609 to 630 (HQPGATTNNNNHSSSTAISAPS), and 674 to 760 (QEQH…VSDH). A compositionally biased stretch (polar residues) spans 515–539 (NSRFARDNNQTAQPTYESPLSTSDT). The residue at position 570 (S570) is a Phosphoserine. T574 bears the Phosphothreonine mark. S576 bears the Phosphoserine mark. T577 carries the post-translational modification Phosphothreonine. Low complexity predominate over residues 613 to 628 (ATTNNNNHSSSTAISA). Residues 646–684 (RNLDDLEKHINKEGQSIQQVQDWIDKLAQEQHEKQQQQQ) are a coiled coil. Composition is skewed to polar residues over residues 701 to 722 (ATTTPSSNVPNGGHYNNGNISF) and 731 to 742 (PGSNVSSNINDS). A compositionally biased stretch (basic and acidic residues) spans 744–760 (GNEKKSKKRSIEEVSDH).

Belongs to the HSF family. As to quaternary structure, homotrimer. Homotrimerization increases the affinity of HSF1 to DNA. Interacts with HSP90. In terms of processing, activated by phosphorylation of at least Ser-570, Thr-574, Ser-576 and Thr-577 in response to heat shock. Additional unidentified residues are also phosphorylated in response to heat shock.

The protein localises to the nucleus. Its function is as follows. DNA-binding transcription factor that specifically binds heat shock promoter elements (HSE) and activates transcription. With HSP90, is required for the modulation of the chaperone levels in response to growth temperature, rather than the activation of acute responses to sudden thermal transitions. Activated during infection and contributes to full virulence. The sequence is that of Heat shock transcription factor from Candida albicans (strain SC5314 / ATCC MYA-2876) (Yeast).